Consider the following 473-residue polypeptide: ATP synthase subunit beta (473 aa).

An ATP-binding site is contributed by 158 to 165; that stretch reads GGAGVGKT.

This sequence belongs to the ATPase alpha/beta chains family. As to quaternary structure, F-type ATPases have 2 components, CF(1) - the catalytic core - and CF(0) - the membrane proton channel. CF(1) has five subunits: alpha(3), beta(3), gamma(1), delta(1), epsilon(1). CF(0) has three main subunits: a(1), b(2) and c(9-12). The alpha and beta chains form an alternating ring which encloses part of the gamma chain. CF(1) is attached to CF(0) by a central stalk formed by the gamma and epsilon chains, while a peripheral stalk is formed by the delta and b chains.

It is found in the cell membrane. The enzyme catalyses ATP + H2O + 4 H(+)(in) = ADP + phosphate + 5 H(+)(out). Its function is as follows. Produces ATP from ADP in the presence of a proton gradient across the membrane. The catalytic sites are hosted primarily by the beta subunits. The chain is ATP synthase subunit beta from Bacillus velezensis (strain DSM 23117 / BGSC 10A6 / LMG 26770 / FZB42) (Bacillus amyloliquefaciens subsp. plantarum).